The sequence spans 670 residues: Serine/threonine-rich protein adg2 (670 aa).

An N-terminal signal peptide occupies residues 1-19; the sequence is MRRLTISGLLISLAKLCAG. N-linked (GlcNAc...) asparagine glycosylation is found at N77, N159, N204, N224, N274, N297, N327, N351, N370, N381, N405, N424, N435, N459, N478, N489, and N513. The tract at residues 526 to 651 is disordered; the sequence is GSVSSFSSSP…MSLPPSAGSS (126 aa).

It is found in the secreted. Its subcellular location is the endoplasmic reticulum. This Schizosaccharomyces pombe (strain 972 / ATCC 24843) (Fission yeast) protein is Serine/threonine-rich protein adg2 (adg2).